We begin with the raw amino-acid sequence, 446 residues long: Chromosomal replication initiator protein DnaA (446 aa).

The interval 1–92 (MENISDLWNS…SQAEEEIDLP (92 aa)) is domain I, interacts with DnaA modulators. The interval 93–109 (PAKPNAAQDDSNHLPQS) is domain II. The interval 110–326 (MLNPKYTFDT…GALIRVVAYS (217 aa)) is domain III, AAA+ region. 4 residues coordinate ATP: glycine 154, glycine 156, lysine 157, and threonine 158. Residues 327–446 (SLINKDINAD…QVEEINDILK (120 aa)) are domain IV, binds dsDNA.

The protein belongs to the DnaA family. In terms of assembly, oligomerizes as a right-handed, spiral filament on DNA at oriC.

It localises to the cytoplasm. Functionally, plays an essential role in the initiation and regulation of chromosomal replication. ATP-DnaA binds to the origin of replication (oriC) to initiate formation of the DNA replication initiation complex once per cell cycle. Binds the DnaA box (a 9 base pair repeat at the origin) and separates the double-stranded (ds)DNA. Forms a right-handed helical filament on oriC DNA; dsDNA binds to the exterior of the filament while single-stranded (ss)DNA is stabiized in the filament's interior. The ATP-DnaA-oriC complex binds and stabilizes one strand of the AT-rich DNA unwinding element (DUE), permitting loading of DNA polymerase. After initiation quickly degrades to an ADP-DnaA complex that is not apt for DNA replication. Binds acidic phospholipids. The protein is Chromosomal replication initiator protein DnaA of Bacillus anthracis (strain A0248).